Reading from the N-terminus, the 638-residue chain is Octopamine receptor 1 (638 aa).

The Extracellular portion of the chain corresponds to 1-28 (MSRDIFMKRLRLHLLFDEVAMVTHIVGD). A helical transmembrane segment spans residues 29–53 (VLSSVLLCAVVLLVLVGNTLVVAAV). Topologically, residues 54-64 (ATSRKLRTVTN) are cytoplasmic. Residues 65-87 (VFIVNLACADLLLGVLVLPFSAV) traverse the membrane as a helical segment. Over 88 to 102 (NEIKDVWIFGHVWCQ) the chain is Extracellular. An intrachain disulfide couples Cys-101 to Cys-230. The helical transmembrane segment at 103 to 124 (VWLAVDVWLCTASILNLCCISL) threads the bilayer. The Cytoplasmic segment spans residues 125–147 (DRYLAITRPIRYPGLMSAKRAKT). A helical membrane pass occupies residues 148-167 (LVAGVWLFSFVICCPPLIGW). Residues 168–239 (NDGGDGIMDY…CELTNSRGYR (72 aa)) lie on the Extracellular side of the membrane. Residues Asn-178, Asn-207, and Asn-215 are each glycosylated (N-linked (GlcNAc...) asparagine). A helical transmembrane segment spans residues 240–259 (IYAALGSFFIPMLVMVFFYL). At 260–520 (QIYRAAVKTI…FNREKKAAKT (261 aa)) the chain is on the cytoplasmic side. Residues 521-545 (LAIIVGAFIMCWMPFFTIYLVGAFC) traverse the membrane as a helical segment. The Extracellular segment spans residues 546 to 551 (ENCISP). A helical transmembrane segment spans residues 552–575 (IVFSVAFWLGYCNSAMNPCVYALF). Over 576-638 (SRDFRFAFRK…TASGGNGGYT (63 aa)) the chain is Cytoplasmic. A disordered region spans residues 618-638 (DDAKSSSDIGPTASGGNGGYT).

This sequence belongs to the G-protein coupled receptor 1 family. Expressed in the central nervous system.

It localises to the cell membrane. In terms of biological role, G-protein coupled receptor for octopamine (OA), which is a neurotransmitter, neurohormone, and neuromodulator in invertebrates. Activation of this receptor by octopamine induces an increase in both inositol phosphates and cyclic AMP. The coupling to adenylyl cyclase seems to be less efficient than the coupling to phospholipase C. The rank order of potency for agonists is p-synephrine &gt;= clonidine &gt; p-octopamine = xylometazoline = phenylephrine = oxymetazoline &gt; B-HT920 &gt; serotonin = p-tyramine &gt; epinephrine &gt; norepinephrine &gt; methoxamine = dopamine = histamine. For antagonists, the rank order is yohimbine &gt; chlopromazine / spiperone &gt; phentolamine &gt; mianserine &gt; rauwolscine &gt; prazosin &gt; alprenolol / propanolol &gt; pindolol. The protein is Octopamine receptor 1 of Lymnaea stagnalis (Great pond snail).